The chain runs to 104 residues: Large ribosomal subunit protein bL21 (104 aa).

The protein belongs to the bacterial ribosomal protein bL21 family. Part of the 50S ribosomal subunit. Contacts protein L20.

Its function is as follows. This protein binds to 23S rRNA in the presence of protein L20. In Clostridium botulinum (strain ATCC 19397 / Type A), this protein is Large ribosomal subunit protein bL21.